Here is a 215-residue protein sequence, read N- to C-terminus: Pyrrolidone-carboxylate peptidase (215 aa).

Active-site residues include E80, C143, and H167.

This sequence belongs to the peptidase C15 family. In terms of assembly, homotetramer.

Its subcellular location is the cytoplasm. The catalysed reaction is Release of an N-terminal pyroglutamyl group from a polypeptide, the second amino acid generally not being Pro.. In terms of biological role, removes 5-oxoproline from various penultimate amino acid residues except L-proline. The protein is Pyrrolidone-carboxylate peptidase of Bacillus mycoides (strain KBAB4) (Bacillus weihenstephanensis).